The primary structure comprises 330 residues: Ketol-acid reductoisomerase (NADP(+)) (330 aa).

Residues 2 to 182 (VEIYYDDDAS…GGTRAGALRT (181 aa)) enclose the KARI N-terminal Rossmann domain. Residues 25–28 (YGSQ), Ser-51, and Ser-53 contribute to the NADP(+) site. The active site involves His-108. Gly-134 lines the NADP(+) pocket. One can recognise a KARI C-terminal knotted domain in the interval 183–328 (TFTEETETDL…AKLRPLMSWI (146 aa)). Residues Asp-191, Glu-195, Glu-227, and Glu-231 each coordinate Mg(2+). Ser-252 contacts substrate.

This sequence belongs to the ketol-acid reductoisomerase family. It depends on Mg(2+) as a cofactor.

The enzyme catalyses (2R)-2,3-dihydroxy-3-methylbutanoate + NADP(+) = (2S)-2-acetolactate + NADPH + H(+). The catalysed reaction is (2R,3R)-2,3-dihydroxy-3-methylpentanoate + NADP(+) = (S)-2-ethyl-2-hydroxy-3-oxobutanoate + NADPH + H(+). Its pathway is amino-acid biosynthesis; L-isoleucine biosynthesis; L-isoleucine from 2-oxobutanoate: step 2/4. It participates in amino-acid biosynthesis; L-valine biosynthesis; L-valine from pyruvate: step 2/4. Functionally, involved in the biosynthesis of branched-chain amino acids (BCAA). Catalyzes an alkyl-migration followed by a ketol-acid reduction of (S)-2-acetolactate (S2AL) to yield (R)-2,3-dihydroxy-isovalerate. In the isomerase reaction, S2AL is rearranged via a Mg-dependent methyl migration to produce 3-hydroxy-3-methyl-2-ketobutyrate (HMKB). In the reductase reaction, this 2-ketoacid undergoes a metal-dependent reduction by NADPH to yield (R)-2,3-dihydroxy-isovalerate. In Frankia alni (strain DSM 45986 / CECT 9034 / ACN14a), this protein is Ketol-acid reductoisomerase (NADP(+)).